Consider the following 204-residue polypeptide: Adenylyl-sulfate kinase (204 aa).

34 to 41 contributes to the ATP binding site; sequence GLSGSGKS. Ser-108 functions as the Phosphoserine intermediate in the catalytic mechanism.

This sequence belongs to the APS kinase family.

It catalyses the reaction adenosine 5'-phosphosulfate + ATP = 3'-phosphoadenylyl sulfate + ADP + H(+). Its pathway is sulfur metabolism; hydrogen sulfide biosynthesis; sulfite from sulfate: step 2/3. In terms of biological role, catalyzes the synthesis of activated sulfate. The polypeptide is Adenylyl-sulfate kinase (Phocaeicola vulgatus (strain ATCC 8482 / DSM 1447 / JCM 5826 / CCUG 4940 / NBRC 14291 / NCTC 11154) (Bacteroides vulgatus)).